A 543-amino-acid chain; its full sequence is MTRYVFITGGVVSSLGKGIASASLGALLQARGYSVRLRKLDPYLNVDPGTMSPYQHGEVFVTDDGAETDLDLGHYERFTGVHATKSDNATTGRIYSEVIARERRGDYLGATVQVIPHITDAIKQAILRETAGLDFVLVEIGGTVGDIESLPFLEAIRQLGNELGPHDAMFVHLTLVPYIPSAGELKTKPTQHSVKELLNVGIQPHMLICRCDRPIPEGERRKIALFCNVRPEAVVPALDVGTIYEVPISYHEAGLDREVLRHFGLPHDAEPDLGRWRRIVETVRNPEGEVTIAVVGKYTNLLDSYKSLGEALTHGGIANRVRVRLDWVDSEIFEQPGAVARLDGVHGILVPGGFGERGTGGKIEAVRFARERHVPFLGICFGMQMAVIEAARNLAGLPGASSTEFGPCEVPVVGLLTEWARGNEIERRAAEGDLGGTMRLGAYAATLVEGSLVRAVYGDAATIEERHRHRYEVNIHYRERLESAGLRFSGLSPDGLLPEIVEYPDHPWFIGVQYHPELKSKPFDPHPLFAGFIEAAVKQMRLV.

Residues 1–265 (MTRYVFITGG…DREVLRHFGL (265 aa)) are amidoligase domain. Residue S13 coordinates CTP. S13 serves as a coordination point for UTP. 14 to 19 (SLGKGI) provides a ligand contact to ATP. Y54 is an L-glutamine binding site. D71 is an ATP binding site. The Mg(2+) site is built by D71 and E139. CTP is bound by residues 146–148 (DIE), 186–191 (KTKPTQ), and K222. Residues 186-191 (KTKPTQ) and K222 contribute to the UTP site. Residue V240 participates in ATP binding. The 252-residue stretch at 291 to 542 (TIAVVGKYTN…IEAAVKQMRL (252 aa)) folds into the Glutamine amidotransferase type-1 domain. G353 provides a ligand contact to L-glutamine. C380 (nucleophile; for glutamine hydrolysis) is an active-site residue. L-glutamine is bound by residues 381 to 384 (FGMQ), E404, and R470. Residues H515 and E517 contribute to the active site.

This sequence belongs to the CTP synthase family. In terms of assembly, homotetramer.

It carries out the reaction UTP + L-glutamine + ATP + H2O = CTP + L-glutamate + ADP + phosphate + 2 H(+). The enzyme catalyses L-glutamine + H2O = L-glutamate + NH4(+). The catalysed reaction is UTP + NH4(+) + ATP = CTP + ADP + phosphate + 2 H(+). It participates in pyrimidine metabolism; CTP biosynthesis via de novo pathway; CTP from UDP: step 2/2. Allosterically activated by GTP, when glutamine is the substrate; GTP has no effect on the reaction when ammonia is the substrate. The allosteric effector GTP functions by stabilizing the protein conformation that binds the tetrahedral intermediate(s) formed during glutamine hydrolysis. Inhibited by the product CTP, via allosteric rather than competitive inhibition. Functionally, catalyzes the ATP-dependent amination of UTP to CTP with either L-glutamine or ammonia as the source of nitrogen. Regulates intracellular CTP levels through interactions with the four ribonucleotide triphosphates. The sequence is that of CTP synthase from Acidiphilium cryptum (strain JF-5).